The chain runs to 629 residues: tRNA uridine 5-carboxymethylaminomethyl modification enzyme MnmG (629 aa).

14 to 19 (GAGHAG) lines the FAD pocket. 274-288 (GPRYCPSIEDKVVRF) lines the NAD(+) pocket.

This sequence belongs to the MnmG family. In terms of assembly, homodimer. Heterotetramer of two MnmE and two MnmG subunits. It depends on FAD as a cofactor.

Its subcellular location is the cytoplasm. In terms of biological role, NAD-binding protein involved in the addition of a carboxymethylaminomethyl (cmnm) group at the wobble position (U34) of certain tRNAs, forming tRNA-cmnm(5)s(2)U34. This is tRNA uridine 5-carboxymethylaminomethyl modification enzyme MnmG from Xylella fastidiosa (strain 9a5c).